Consider the following 509-residue polypeptide: Taxoid 14-beta-hydroxylase (509 aa).

3 helical membrane-spanning segments follow: residues 20-40 (AILFIVLSAVAGIVLPLLLFL), 186-206 (SVVALVGDLVFDISACLFFNI), and 218-238 (LLEIIAVGVLAVPVDLPGFAY). Cysteine 443 lines the heme pocket.

The protein belongs to the cytochrome P450 family.

Its subcellular location is the microsome membrane. It catalyses the reaction 10beta-hydroxytaxa-4(20),11-dien-5alpha-yl acetate + NADPH + O2 + H(+) = 10beta,14beta-dihydroxytaxa-4(20),11-dien-5alpha-yl acetate + NADP(+) + H2O. The protein operates within alkaloid biosynthesis; taxol biosynthesis. Functionally, catalyzes the conversion of 5-alpha-acetoxy-10beta-ol to 5-alpha-acetoxy-10beta,14beta-dihydroxy taxadiene. Also acts on taxa-4(20),11-dien-5-alpha-yl acetate. The sequence is that of Taxoid 14-beta-hydroxylase from Taxus cuspidata (Japanese yew).